The chain runs to 615 residues: TORTIFOLIA1-like protein 3 (615 aa).

HEAT repeat units follow at residues 44 to 81 (GNLQ…SLPL), 86 to 123 (PFLS…RTTK), 125 to 163 (PFYS…SASD), 168 to 205 (RLGQ…AGGL), and 213 to 250 (GGLK…MERN). The interval 288 to 446 (VPDLSEEVSP…HHVLSENPNS (159 aa)) is disordered. Residues 318 to 347 (RVGSTPAKSRTHLVNRSTPPGSSLATTARK) are compositionally biased toward polar residues. Basic and acidic residues predominate over residues 391–406 (DEQHCDHDENAKETSH). Over residues 407-426 (SSHNTVQKLGGVSSSLNGNI) the composition is skewed to polar residues. Ser-456 bears the Phosphoserine mark.

This is TORTIFOLIA1-like protein 3 from Arabidopsis thaliana (Mouse-ear cress).